The primary structure comprises 668 residues: Spindle assembly abnormal protein 6 homolog (668 aa).

Positions 39–91 (VHKKELVVRLSDDTDPFFLYNLTLGEEDFQSLKNQQGLLVEFSAFPQRFIDLL) constitute a PISA domain. A coiled-coil region spans residues 182 to 482 (LGVTQQALAE…NVIAWLNKQL (301 aa)). Positions 623–668 (GSVPVKGQRNGSSAGTVPVRPALPKSGSSPILSAYFPGQQSRLPAS) are disordered.

Nine homodimers form a cartwheel structure with an internal diameter of 23 nM and radial spokes connecting to the microtubule triplets.

The protein resides in the cytoplasm. It localises to the cytoskeleton. The protein localises to the microtubule organizing center. It is found in the centrosome. Functionally, central scaffolding component of the centrioles ensuring their 9-fold symmetry. Required for centrosome biogenesis and duplication: required both for mother-centriole-dependent centriole duplication and deuterosome-dependent centriole amplification in multiciliated cells. In Xenopus laevis (African clawed frog), this protein is Spindle assembly abnormal protein 6 homolog (sas6).